A 343-amino-acid chain; its full sequence is HTH-type transcriptional regulator GntR (343 aa).

The region spanning 16-70 is the HTH lacI-type domain; the sequence is PTLNEVARRAGVSPITASRALRGVASVAEELAQKVRDAARELGYVANPAARALAS. Residues 18–37 constitute a DNA-binding region (H-T-H motif); sequence LNEVARRAGVSPITASRALR.

With respect to regulation, free GntR fails to recognize gluconate and 6-phosphogluconate, whereas the GntR/DNA complexes recognize both ligands. It is therefore likely that GntR DNA binding induces structural changes that permit GntR to recognize effectors. Its function is as follows. Involved in the regulation of glucose metabolism. Represses its own expression as well as that of the gluconate permease GntP. It employs an effector mediated de-repression mechanism: in the absence of ligand, GntR binds to the gntR and gntP promoters and represses their expression. The release of promoter bound GntR is induced by gluconate and 6-phosphogluconate that bind with similar apparent affinities to the GntR/DNA complex. The release of GntR leads to transcription of the genes. The chain is HTH-type transcriptional regulator GntR from Pseudomonas aeruginosa (strain ATCC 15692 / DSM 22644 / CIP 104116 / JCM 14847 / LMG 12228 / 1C / PRS 101 / PAO1).